The sequence spans 163 residues: Nucleotide-binding protein NT01EI_1072 (163 aa).

This sequence belongs to the YajQ family.

Nucleotide-binding protein. The polypeptide is Nucleotide-binding protein NT01EI_1072 (Edwardsiella ictaluri (strain 93-146)).